The sequence spans 347 residues: Methionine import ATP-binding protein MetN (347 aa).

In terms of domain architecture, ABC transporter spans 2–247 (ITTTGLTKVY…PGSELASALF (246 aa)). 38–45 (GQSGAGKS) lines the ATP pocket.

Belongs to the ABC transporter superfamily. Methionine importer (TC 3.A.1.24) family. The complex is composed of two ATP-binding proteins (MetN), two transmembrane proteins (MetI) and a solute-binding protein (MetQ).

Its subcellular location is the cell membrane. The enzyme catalyses L-methionine(out) + ATP + H2O = L-methionine(in) + ADP + phosphate + H(+). It catalyses the reaction D-methionine(out) + ATP + H2O = D-methionine(in) + ADP + phosphate + H(+). Its function is as follows. Part of the ABC transporter complex MetNIQ involved in methionine import. Responsible for energy coupling to the transport system. The sequence is that of Methionine import ATP-binding protein MetN from Streptomyces avermitilis (strain ATCC 31267 / DSM 46492 / JCM 5070 / NBRC 14893 / NCIMB 12804 / NRRL 8165 / MA-4680).